The sequence spans 465 residues: GTPase Der (465 aa).

EngA-type G domains lie at 3–167 (PLVA…PERS) and 179–352 (IHIA…VSAL). GTP contacts are provided by residues 9–16 (GRPNVGKS), 57–61 (DTGGM), 119–122 (NKID), 185–192 (GRPNVGKS), 232–236 (DTAGL), and 297–300 (NKWD). In terms of domain architecture, KH-like spans 353–437 (RQFSTSEVNK…PVRFLFREGD (85 aa)).

This sequence belongs to the TRAFAC class TrmE-Era-EngA-EngB-Septin-like GTPase superfamily. EngA (Der) GTPase family. Associates with the 50S ribosomal subunit.

Functionally, GTPase that plays an essential role in the late steps of ribosome biogenesis. This chain is GTPase Der, found in Xylella fastidiosa (strain M23).